The primary structure comprises 50 residues: Thrombin-like enzyme BpirSP41 (50 aa).

Residues 1-50 (VVGGDECDINEHPFLAFLYSHGYFCGLTLINQEWVLTAAHCDRRFMRIYL) enclose the Peptidase S1 domain. A disulfide bond links Cys25 and Cys41. His40 (charge relay system) is an active-site residue.

The protein belongs to the peptidase S1 family. Snake venom subfamily. As to quaternary structure, monomer. Post-translationally, N-glycosylated. In terms of tissue distribution, expressed by the venom gland.

The protein resides in the secreted. With respect to regulation, inhibited by serine protease inhibitors PMSF, benzamidine, leupeptin and aprotinin, as well as by copper ions (Cu2+). Not inhibited by metalloprotease inhibitors EDTA, EGTA and 1,10-phenanthroline, as well as by barium (Ba2+) and calcium ion (Ca2+). Functionally, snake venom serine protease that interferes with the hemostatic system of the prey. It almost completely degrades both Aalpha (FGA) and Bbeta (FGB) chains of fibrinogen. It presents a higher ability to degrade fibrin clots than BpirSP27. It hydrolyzes chromogenic substrates S-2238 (used for testing thrombin activity), S-2222 (factor Xa), S-2266 (glandular kallikrein and factor XIa), and S-2302 (plasma kallikrein, factor XIa and XIIa). It shows a decrease in the clotting time of human plasma in the presence of increasing doses of the enzyme. Its minimum coagulant dose (MCD) is 20 ug. It promotes platelet aggregation with a maximum of aggregation of 20%, regardless of the concentration increase or the presence of calcium. It also shows 40% inhibition of the hemolytic activity promoted by the complement pathways and possess only a minor role in the induction of edema and pain in rat. The sequence is that of Thrombin-like enzyme BpirSP41 from Bothrops pirajai (Piraja's lancehead).